Consider the following 624-residue polypeptide: Protein FAM234B (624 aa).

The segment at 1-91 (MATVLSRALK…GFPSEPLGGL (91 aa)) is disordered. Serine 16 bears the Phosphoserine mark. A Phosphothreonine modification is found at threonine 26. Residues serine 30, serine 33, and serine 63 each carry the phosphoserine modification. The helical transmembrane segment at 107-127 (VFLLTLVISMVLVLLCAFLIP) threads the bilayer.

The protein belongs to the FAM234 family.

It is found in the membrane. It localises to the golgi outpost. The protein resides in the cytoplasm. The protein localises to the cytoskeleton. Its subcellular location is the microtubule organizing center. The protein is Protein FAM234B of Mus musculus (Mouse).